A 287-amino-acid polypeptide reads, in one-letter code: Small ribosomal subunit biogenesis GTPase RsgA (287 aa).

The region spanning 61 to 218 (SSELIRPTVA…LVDTPGFTTL (158 aa)) is the CP-type G domain. GTP-binding positions include 110-113 (NKED) and 161-169 (GPSGAGKST). Residues C242, C247, H249, and C255 each contribute to the Zn(2+) site.

It belongs to the TRAFAC class YlqF/YawG GTPase family. RsgA subfamily. Monomer. Associates with 30S ribosomal subunit, binds 16S rRNA. Zn(2+) is required as a cofactor.

It localises to the cytoplasm. One of several proteins that assist in the late maturation steps of the functional core of the 30S ribosomal subunit. Helps release RbfA from mature subunits. May play a role in the assembly of ribosomal proteins into the subunit. Circularly permuted GTPase that catalyzes slow GTP hydrolysis, GTPase activity is stimulated by the 30S ribosomal subunit. This Clostridium perfringens (strain ATCC 13124 / DSM 756 / JCM 1290 / NCIMB 6125 / NCTC 8237 / Type A) protein is Small ribosomal subunit biogenesis GTPase RsgA.